We begin with the raw amino-acid sequence, 184 residues long: ATP synthase subunit b, chloroplastic (184 aa).

A helical transmembrane segment spans residues 27–49 (LATNPINLSVVLGVLIFFGKGVL).

The protein belongs to the ATPase B chain family. In terms of assembly, F-type ATPases have 2 components, F(1) - the catalytic core - and F(0) - the membrane proton channel. F(1) has five subunits: alpha(3), beta(3), gamma(1), delta(1), epsilon(1). F(0) has four main subunits: a(1), b(1), b'(1) and c(10-14). The alpha and beta chains form an alternating ring which encloses part of the gamma chain. F(1) is attached to F(0) by a central stalk formed by the gamma and epsilon chains, while a peripheral stalk is formed by the delta, b and b' chains.

It localises to the plastid. The protein localises to the chloroplast thylakoid membrane. F(1)F(0) ATP synthase produces ATP from ADP in the presence of a proton or sodium gradient. F-type ATPases consist of two structural domains, F(1) containing the extramembraneous catalytic core and F(0) containing the membrane proton channel, linked together by a central stalk and a peripheral stalk. During catalysis, ATP synthesis in the catalytic domain of F(1) is coupled via a rotary mechanism of the central stalk subunits to proton translocation. Its function is as follows. Component of the F(0) channel, it forms part of the peripheral stalk, linking F(1) to F(0). The sequence is that of ATP synthase subunit b, chloroplastic from Populus alba (White poplar).